The chain runs to 377 residues: MSSISTGRTALRSARRVVVKIGTNALTNATGRFNRQHFDALGQDLLWAAQGRELVVVSSGAIALGVERLGLPSRPRDIPGKQACAAVGQSRLVQAYEEAFAAHGKAVAQVLLTHEDVQERRRYLNVKHTLERLLTAGVVPVINENDTVSVDELKFGDNDTLAGLVAGVVDADALVLLSDVEGLYTGDPRRDAGAELLATVMQVTPEVLALATGTSSGVGTGGMSTKVRAAARASDSGIHCVITSGAVPGRLRAVLEGADVGTHFEPTGSRRSARAAWIAHALRARGTLTVDAGAREAIVTGKRSLLPSGVRGVEGDFGRGDPVDLVDAEGAVFARGLAAYDANELRRIAGHRTADIEAVLGYRYLDEAVHRDDLAVL.

ATP is bound at residue Lys-20. Ser-59, Asp-146, and Asn-158 together coordinate substrate. ATP contacts are provided by residues 178–179 (SD) and 220–226 (TGGMSTK). In terms of domain architecture, PUA spans 285–363 (RGTLTVDAGA…ADIEAVLGYR (79 aa)).

It belongs to the glutamate 5-kinase family.

The protein localises to the cytoplasm. It carries out the reaction L-glutamate + ATP = L-glutamyl 5-phosphate + ADP. It functions in the pathway amino-acid biosynthesis; L-proline biosynthesis; L-glutamate 5-semialdehyde from L-glutamate: step 1/2. Catalyzes the transfer of a phosphate group to glutamate to form L-glutamate 5-phosphate. This is Glutamate 5-kinase from Myxococcus xanthus (strain DK1622).